The primary structure comprises 126 residues: Methylglyoxal synthase (126 aa).

An MGS-like domain is found at Met-1 to Gln-126. Residues His-9, Lys-13, Thr-35 to Thr-38, and Ser-55 to Gly-56 each bind substrate. The active-site Proton donor/acceptor is the Asp-61. Substrate is bound at residue His-88.

The protein belongs to the methylglyoxal synthase family.

The enzyme catalyses dihydroxyacetone phosphate = methylglyoxal + phosphate. Functionally, catalyzes the formation of methylglyoxal from dihydroxyacetone phosphate. This is Methylglyoxal synthase from Thermus thermophilus (strain ATCC BAA-163 / DSM 7039 / HB27).